Here is a 245-residue protein sequence, read N- to C-terminus: MKRFMAIVSYDGTNFCGFQVQKDVRTVQGMFEQALERILKQRVITIAAGRTDTGVHANGQIVCFDCYLDIDEESMKNAMNANLPDDIYVRKVVEVDKNFHPRFDAKRRIYHYLIYNSQEPNLFIRNYAWWFPYKLNICKMREAAKFFEGEHDFRSFMKSGDHRENTVRTIYRVRVLQLRGGIILIRVEGRSFLRRMVRNMVGALVKVGVGEWKPEDISRVLELKDRSKAAVTAPPHGLYLYAVDF.

Catalysis depends on D52, which acts as the Nucleophile. Y110 contacts substrate.

It belongs to the tRNA pseudouridine synthase TruA family. Homodimer.

The catalysed reaction is uridine(38/39/40) in tRNA = pseudouridine(38/39/40) in tRNA. Its function is as follows. Formation of pseudouridine at positions 38, 39 and 40 in the anticodon stem and loop of transfer RNAs. The chain is tRNA pseudouridine synthase A from Pseudothermotoga lettingae (strain ATCC BAA-301 / DSM 14385 / NBRC 107922 / TMO) (Thermotoga lettingae).